Reading from the N-terminus, the 696-residue chain is Gametogenetin-binding protein 2 (696 aa).

Serine 360 carries the phosphoserine modification.

In terms of assembly, interacts with GGN.

The protein resides in the cytoplasmic vesicle. In terms of biological role, may be involved in spermatogenesis. This chain is Gametogenetin-binding protein 2 (Ggnbp2), found in Rattus norvegicus (Rat).